Reading from the N-terminus, the 338-residue chain is Anthocyanidin reductase ((2S)-flavan-3-ol-forming) (338 aa).

NADP(+) is bound by residues 18–21, Lys-48, 87–90, and Tyr-168; these read TGFV and VATP.

It belongs to the NAD(P)-dependent epimerase/dehydratase family. Dihydroflavonol-4-reductase subfamily. Expressed in seeds, grape skins, flowers and leaves.

The enzyme catalyses a (2S,3R)-flavan-3-ol + 2 NADP(+) = an anthocyanidin with a 3-hydroxy group + 2 NADPH + 2 H(+). It carries out the reaction a (2S,3S)-flavan-3-ol + 2 NADP(+) = an anthocyanidin with a 3-hydroxy group + 2 NADPH + 2 H(+). It functions in the pathway secondary metabolite biosynthesis; flavonoid biosynthesis. Inhibited at NaCl concentrations higher than 200 mM. Produces the terminal flavan-3-ol monomers required for the formation of proanthocyanidins or condensed tannins in leaves and flowers, as well as in the skin and seeds of developing berries. Behaves as a reductase and as a C-3 epimerase. Catalyzes the double reduction of anthocyanidins, producing a mixture of (2S,3S)- and (2S,3R)-flavan-3-ols. The enzyme catalyzes sequential hydride transfers to C-2 and C-4, respectively and epimerization at C-3 is achieved by tautomerization that occurs between the two hydride transfers. Converts cyanidin, pelargonidin and delphinidin into catechin and epicatechin, afzelechin and epiafzelechin, and gallocatechin and epigallocatechin respectively. In Vitis vinifera (Grape), this protein is Anthocyanidin reductase ((2S)-flavan-3-ol-forming).